A 383-amino-acid polypeptide reads, in one-letter code: Protein KES1 (383 aa).

Over residues 317-339 (FETASKDKARIENAQRQKRKDEA) the composition is skewed to basic and acidic residues. The disordered stretch occupies residues 317-346 (FETASKDKARIENAQRQKRKDEAAAGTPHQ).

It belongs to the OSBP family.

Lipid transporter involved in lipid countertransport between the Golgi complex and membranes of the endoplasmic reticulum: specifically exchanges sterol with phosphatidylinositol 4-phosphate (PI4P), delivering sterol to the Golgi in exchange for PI4P, which is degraded by the SAC1 phosphatase in the endoplasmic reticulum. This is Protein KES1 (KES1) from Mycosarcoma maydis (Corn smut fungus).